The chain runs to 926 residues: Alanine--tRNA ligase (926 aa).

H615, H619, C719, and H723 together coordinate Zn(2+). Positions 887–910 (RVGGGGGGPPDFAQGGGPDADALD) are disordered. Residues 888–904 (VGGGGGGPPDFAQGGGP) are compositionally biased toward gly residues.

The protein belongs to the class-II aminoacyl-tRNA synthetase family. Zn(2+) serves as cofactor.

Its subcellular location is the cytoplasm. The enzyme catalyses tRNA(Ala) + L-alanine + ATP = L-alanyl-tRNA(Ala) + AMP + diphosphate. In terms of biological role, catalyzes the attachment of alanine to tRNA(Ala) in a two-step reaction: alanine is first activated by ATP to form Ala-AMP and then transferred to the acceptor end of tRNA(Ala). Also edits incorrectly charged Ser-tRNA(Ala) and Gly-tRNA(Ala) via its editing domain. The polypeptide is Alanine--tRNA ligase (Halorubrum lacusprofundi (strain ATCC 49239 / DSM 5036 / JCM 8891 / ACAM 34)).